The following is a 431-amino-acid chain: Glucose-1-phosphate adenylyltransferase (431 aa).

Beta-D-fructose 1,6-bisphosphate is bound at residue Lys-39. AMP is bound by residues Arg-40, His-46, and Arg-52. An alpha-D-glucose 1-phosphate-binding site is contributed by Tyr-114. Arg-130 provides a ligand contact to AMP. Alpha-D-glucose 1-phosphate contacts are provided by residues Gly-179, 194 to 195, and Ser-212; that span reads EK. Glu-370 and Arg-386 together coordinate AMP. Beta-D-fructose 1,6-bisphosphate is bound by residues 419-423 and 429-431; these read REMLR and QER.

It belongs to the bacterial/plant glucose-1-phosphate adenylyltransferase family. Homotetramer.

It catalyses the reaction alpha-D-glucose 1-phosphate + ATP + H(+) = ADP-alpha-D-glucose + diphosphate. It participates in glycan biosynthesis; glycogen biosynthesis. Its activity is regulated as follows. Allosterically activated by fructose-1,6-bisphosphate (F16BP) and inhibited by AMP. In terms of biological role, involved in the biosynthesis of ADP-glucose, a building block required for the elongation reactions to produce glycogen. Catalyzes the reaction between ATP and alpha-D-glucose 1-phosphate (G1P) to produce pyrophosphate and ADP-Glc. The protein is Glucose-1-phosphate adenylyltransferase of Salmonella dublin (strain CT_02021853).